The primary structure comprises 1309 residues: Nuclear pore complex protein NUP1 (1309 aa).

Disordered stretches follow at residues 1-58, 83-118, 173-210, 266-296, 329-348, 384-417, 467-538, 594-617, and 635-680; these read MASA…GGGW, RKRL…HKED, AADS…GSMN, RTPF…VTPR, SKWE…SGLK, ESPL…NLVP, LGNL…EEHP, SEAM…NGSL, and SNMA…VFPN. Positions 2–677 are 25 X 2 AA repeats of F-G; the sequence is ASAARGESSN…LEEPKKPAAV (676 aa). Positions 22-32 are enriched in basic residues; that stretch reads KFRKPTARRSQ. Positions 47-58 are enriched in gly residues; the sequence is GLGGGDVRGGGW. Residues 91 to 101 are compositionally biased toward polar residues; it reads TPLQSPEQQKQ. Residues 195–204 show a composition bias toward basic and acidic residues; that stretch reads PSHERDRTHP. Residues 268–283 are compositionally biased toward polar residues; it reads PFPQKSPTMSLVTKPS. A compositionally biased stretch (basic and acidic residues) spans 396 to 405; that stretch reads KTTHTSKDSA. Composition is skewed to polar residues over residues 597 to 617 and 635 to 659; these read MPST…NGSL and SNMA…SGKP. A compositionally biased stretch (basic and acidic residues) spans 660-673; that stretch reads TSEEKRIPLEEPKK. Repeat unit 1 spans residues 711-712; sequence FG. The disordered stretch occupies residues 719–865; it reads KPTESKKTFS…VKNATFGNTS (147 aa). Low complexity-rich tracts occupy residues 728–741 and 767–783; these read SNSA…TSAA and SSPS…SDNS. The span at 789-803 shows a compositional bias: polar residues; the sequence is STVQSFAATHNSSSI. Repeat 2 spans residues 804 to 805; it reads FG. Low complexity predominate over residues 809-827; that stretch reads TSNDSNSQSTSASPLSSTS. A run of 12 repeats spans residues 831-832, 861-862, 869-870, 883-884, 898-899, 927-928, 956-957, 983-984, 1004-1005, 1029-1030, 1038-1039, and 1053-1054. Positions 1004–1023 are enriched in low complexity; it reads FGAGNAQTGNTGSGTTTSTQ. The segment at 1004–1028 is disordered; the sequence is FGAGNAQTGNTGSGTTTSTQSIPFQ. A compositionally biased stretch (low complexity) spans 1068-1086; sequence TPQLSSTNSSASSSSTMSS. The segment at 1068 to 1105 is disordered; it reads TPQLSSTNSSASSSSTMSSPLFGTSWQAPNSSPNSGPV. Repeat 15 spans residues 1089-1090; the sequence is FG. Residues 1096 to 1105 are compositionally biased toward low complexity; the sequence is PNSSPNSGPV. 10 repeat units span residues 1121–1122, 1137–1138, 1151–1152, 1153–1154, 1166–1167, 1177–1178, 1186–1187, 1224–1225, 1238–1239, and 1255–1256. Positions 1278-1309 are disordered; it reads FQGGGSFSLGSTGGGDKSGRRIFKAKKSTRKK. The span at 1279–1293 shows a compositional bias: gly residues; that stretch reads QGGGSFSLGSTGGGD. Positions 1297–1309 are enriched in basic residues; sequence RRIFKAKKSTRKK.

Part of the nuclear pore complex (NPC). The NPC has an eight-fold symmetrical structure comprising a central transport channel and two rings, the cytoplasmic and nuclear rings, to which eight filaments are attached. The cytoplasmic filaments have loose ends, while the nuclear filaments are joined in a distal ring, forming a nuclear basket. NPCs are highly dynamic in configuration and composition, and can be devided in 3 subcomplexes, the NUP62 subcomplex, the NUP107-160 subcomplex and the NUP93 subcomplex, containing approximately 30 different nucleoporin proteins. Interacts with EER5, anchoring the TREX-2 complex on the nuclear pore complex. Interacts with UCH1 and UCH2.

It is found in the nucleus envelope. The protein localises to the nucleus. Its subcellular location is the nuclear pore complex. It localises to the cytoplasm. The protein resides in the cytosol. Nucleoporin required for nuclear mRNA export. Functions as an adapter and/or regulator molecule in the periphery of the nuclear pore complex (NPC). May interact with importin proteins and mediate active nucleocytoplasmic transport through the NPC. Involved in regulation of nuclear morphology. In Arabidopsis thaliana (Mouse-ear cress), this protein is Nuclear pore complex protein NUP1.